Consider the following 295-residue polypeptide: 4-hydroxy-tetrahydrodipicolinate synthase (295 aa).

T46 is a pyruvate binding site. Y134 (proton donor/acceptor) is an active-site residue. K162 (schiff-base intermediate with substrate) is an active-site residue. I205 contributes to the pyruvate binding site.

It belongs to the DapA family. In terms of assembly, homotetramer; dimer of dimers.

It is found in the cytoplasm. It catalyses the reaction L-aspartate 4-semialdehyde + pyruvate = (2S,4S)-4-hydroxy-2,3,4,5-tetrahydrodipicolinate + H2O + H(+). It functions in the pathway amino-acid biosynthesis; L-lysine biosynthesis via DAP pathway; (S)-tetrahydrodipicolinate from L-aspartate: step 3/4. Its function is as follows. Catalyzes the condensation of (S)-aspartate-beta-semialdehyde [(S)-ASA] and pyruvate to 4-hydroxy-tetrahydrodipicolinate (HTPA). In Anaeromyxobacter sp. (strain Fw109-5), this protein is 4-hydroxy-tetrahydrodipicolinate synthase.